We begin with the raw amino-acid sequence, 232 residues long: Protein TIFY 10c (232 aa).

Residues 54–73 form a disordered region; sequence PPAAGAGGAFRPPPTTMNLL. Positions 114 to 149 constitute a Tify domain; sequence AGEKAQQLTIFYGGKVVVFENFPSTKVKDLLQIVST. The interval 151–176 is disordered; that stretch reads DGVDKNTGTAATQSLPRPAHNSLPDL. The span at 156-165 shows a compositional bias: polar residues; that stretch reads NTGTAATQSL. The short motif at 177-202 is the Jas element; sequence PIARRNSLHRFLEKRKGRMNANAPYQ. The Nuclear localization signal signature appears at 179 to 186; sequence ARRNSLHR.

It belongs to the TIFY/JAZ family. In terms of assembly, interacts with BHLH148. Interacts with COI1B in a coronatine-dependent manner. Coronatine is an analog of jasmonoyl isoleucine (JA-Ile). Interacts with TIFY5/JAZ2, TIFY6B/JAZ4, TIFY9/JAZ5, TIFY11A, TIFY11D/JAZ12 and TIFY11G/JAZ15. In terms of processing, ubiquitinated. Increase in jasmonoyl isoleucine (JA-Ile) levels mediates its degradation via COI1B-mediated proteasome pathway.

The protein resides in the nucleus. Its subcellular location is the cytoplasm. It localises to the cytosol. In terms of biological role, repressor of jasmonate (JA) responses. Acts as a repressor of JA-induced resistance to the bacterial blight pathogen Xanthomonas oryzae pv. oryzae (Xoo). Regulates JA-induced accumulation of linalool at the transcriptional level of linalool synthase gene LIS. Linalool is important for resistance to bacterial blight pathogen Xoo. This Oryza sativa subsp. indica (Rice) protein is Protein TIFY 10c.